The primary structure comprises 1693 residues: Latrophilin Cirl (1693 aa).

The Extracellular segment spans residues 1–753 (MLPTILSISY…LFTMFDGNMR (753 aa)). The 90-residue stretch at 25–114 (ACEGKKLTIE…KYLEAHYQCI (90 aa)) folds into the SUEL-type lectin domain. An N-linked (GlcNAc...) asparagine glycan is attached at asparagine 142. Polar residues-rich tracts occupy residues 185 to 198 (TAVT…STTA) and 256 to 265 (NVTSPSNTRI). A disordered region spans residues 185 to 299 (TAVTHSTPWS…PGTAASGSVA (115 aa)). Asparagine 256 carries N-linked (GlcNAc...) asparagine glycosylation. A compositionally biased stretch (low complexity) spans 275 to 299 (DDGTLLTTKSSPNRPPGTAASGSVA). N-linked (GlcNAc...) asparagine glycans are attached at residues asparagine 301, asparagine 340, asparagine 397, asparagine 641, asparagine 689, and asparagine 716. Residues 375–399 (YDEYDDDASSTTPAPSGGDCLHNSS) form a disordered region. A GAIN-B domain is found at 564–740 (KKSKIYSSVV…AILMDVVDEH (177 aa)). 2 cysteine pairs are disulfide-bonded: cysteine 695–cysteine 722 and cysteine 710–cysteine 724. The segment at 695–740 (CVFWNYIDHAWSANGCSLESTNRTHSVCSCNHLTNFAILMDVVDEH) is GPS. A helical transmembrane segment spans residues 754–774 (IFIYISIGICVVFIVIALLTL). Residues 775–787 (KLFNGVFVKSART) lie on the Cytoplasmic side of the membrane. A helical transmembrane segment spans residues 788–808 (SIYTSIYLCLLAIELLFLLGI). Residues 809-814 (EQTETS) are Extracellular-facing. Residues 815–835 (IFCGFITIFLHCAILSGTAWF) traverse the membrane as a helical segment. The Cytoplasmic portion of the chain corresponds to 836 to 861 (CYEAFHSYSTLTSDELLLEVDQTPKV). Residues 862–882 (NCYYLLSYGLSLSVVAISLVI) traverse the membrane as a helical segment. The Extracellular segment spans residues 883 to 906 (DPSTYTQNDYCVLMEANALFYATF). A helical membrane pass occupies residues 907–927 (VVPVLVFFVAAIGYTFLSWII). The Cytoplasmic portion of the chain corresponds to 928–954 (MCRKSRTGLKTKEHTRLASVRFDIRCS). The helical transmembrane segment at 955 to 975 (FVFLLLLSAVWCSAYFYLRGA) threads the bilayer. Over 976–985 (KMDDDTADVY) the chain is Extracellular. A helical membrane pass occupies residues 986 to 1006 (GYCFICFNTLLGLYIFVFHCI). At 1007–1693 (QNEKIRREYR…VRCYLEPLAK (687 aa)) the chain is on the cytoplasmic side. Phosphoserine is present on serine 1142. 5 disordered regions span residues 1156-1194 (HKQQ…LKTP), 1220-1247 (KPNS…LHSR), 1294-1319 (QQQL…AEQH), 1433-1521 (GGGS…SDER), and 1601-1673 (LAVN…QQRH). Residues serine 1239 and serine 1246 each carry the phosphoserine modification. Residues 1294–1309 (QQQLRRQQLHQQQQQL) are compositionally biased toward low complexity. Residues serine 1310 and serine 1311 each carry the phosphoserine modification. Residues 1439-1464 (GGSVSSRSQQQQLKKQQQQQSLAQQR) show a composition bias toward low complexity. Composition is skewed to acidic residues over residues 1472–1486 (DDDD…EEAT) and 1496–1507 (CDEDEEEDESDL). A compositionally biased stretch (basic and acidic residues) spans 1508–1521 (EHDAHGLPPQSDER). Positions 1630–1655 (LQKLSPQSTTSSSSHTSHSNPNLHPH) are enriched in low complexity. Residues 1656 to 1672 (QLTHPHPHQHPPHHQQR) show a composition bias toward basic residues.

It belongs to the G-protein coupled receptor 2 family. LN-TM7 subfamily. Forms a heterodimer, consisting of a large extracellular region non-covalently linked to a seven-transmembrane moiety. In terms of processing, proteolytically cleaved into 2 subunits, an extracellular subunit and a seven-transmembrane subunit.

It is found in the cell membrane. This Drosophila sechellia (Fruit fly) protein is Latrophilin Cirl.